The chain runs to 299 residues: CDP-abequose synthase (299 aa).

Position 117 (Thr-117) interacts with substrate. The active-site Proton acceptor is the Tyr-134.

The protein belongs to the NAD(P)-dependent epimerase/dehydratase family.

The enzyme catalyses CDP-alpha-D-abequose + NADP(+) = CDP-4-dehydro-3,6-dideoxy-alpha-D-glucose + NADPH + H(+). The protein operates within bacterial outer membrane biogenesis; LPS O-antigen biosynthesis. This Salmonella typhimurium (strain LT2 / SGSC1412 / ATCC 700720) protein is CDP-abequose synthase (rfbJ).